The primary structure comprises 230 residues: Endonuclease NucS (230 aa).

The protein belongs to the NucS endonuclease family.

It localises to the cytoplasm. Cleaves both 3' and 5' ssDNA extremities of branched DNA structures. This chain is Endonuclease NucS, found in Corynebacterium efficiens (strain DSM 44549 / YS-314 / AJ 12310 / JCM 11189 / NBRC 100395).